The primary structure comprises 1483 residues: MIERGKFRSLTLINWNGFFARTFDLDELVTTLSGGNGAGKSTTMAAFITALIPDLTLLHFRNTTEAGATSGSRDKGLHGKLRPGVCYAALDVVNSLHQRVIVGVRLQQIAGRDRKVDIKPFSIHGLPTAINPTEILTESVSARHARVLPLSELKEKFEAMESVQFKQYNSITDYHSVMFDLGIVARRLRTAADRSKYYRLIEASLYGGISSAITRSLRDYLLPENGGVRKAFQDMEAALRENRMTLEAIRVTQSDRDLFKHLISEATNYVSADYMRHANERRIHLDAALLLRNELFTSRKQRASEQYRHIEMARELAEHNAAESDLETDYQGASDHLNLVQTALRQQEKIDRYDADLEELTFRLEEQNEVVAEAREVQEDNEARSEAAELEVDELKSQLADYQQALDVQQTRAIQYQQALQALQRAQDICQLRDLSVDNAEEWQETFQAKELEATDKLLMLEQKMSVAQAAHSQFEQAYELVTRIAGPVSRSDAWQVGRDVLRDAGNQRYHAEQLEPLRSRVSELGQRLREQQDAERLLSDFCKRYGQQVDAADLENLQAELEAQIELLNESVADAGERRMTLRQELEQLRERIARLTKQAPQWLAAQEILSQLGEQTGQALENSQQVTEFMQQLLERERETTVERDDIAARKREIERQIERLSQPGGSEDARLNHLAERFGGVLLSEIYDDVTIDDAPYFSALYGPARHAIVVPDLSLIREQLDGLDDCPEDLYLIEGDPQSFDDSVFNVEELAKAVVVKAGDRQWRYSRFPKVPLFGRAARENQLEVLRAERETLAERFATLSFDVQKIQRLHQSFSRFIGSHIGVAFEPDPEAALRQLNGRRNEVERELNNHESENQQQRQQYEQAKEGVSQLNRLLPRVSLLLDDTLQDRHEEIQERLAEAQEATRFVQQHGAQLARLEPILAVLQSDPEQHEQLTLDYQQAQQQQRDARQQAFALTEVVQRRAHFGYIDSAGMLNGTSDLNEKLRQRLEQAEAERARAREQLRQHQSQLTQYSQVLASLKSSFDAKRDMLKELQQEMQDIGVHADASAEQRARLRRDELYGALSNNRARRNQLEKQLTFCEAEMDALQKKLRRLERDYQQGREQVVSAKAGWVTVLRMVKDNGVERRLHRRELAYLGGDELRSMSDKALGALRLAVADNEHLRDVLRLSEDPKRPERKIQFYIAVYQHLRERIRQDIIRTDDPVEAIEQMEIELNRLTEELTAREQTLAISSRSVSNIIRKTIQREQNRIRQLNQGLQAVSFGQVKSVRLNVNVREAHSTLLDVLSEQHEQHQDLFKSNRLTFSEALAKLYQRLNPQIDMGQRTPQTIGEELLDYRNYLEMEVEVSRGSDGWLRAESGALSTGEAIGTGMSILVMVVQSWEEESRRLRGKDISPCRLLFLDEAARLDAKSIATLFELCDRLEMQLIIAAPENISPEKGTTYKLVRKVFNNTEHVHVVGLRGFSAEPGAATGSADVGAH.

34–41 (GGNGAGKS) provides a ligand contact to ATP. Coiled coils occupy residues 311 to 426 (EMAR…LQRA) and 547 to 607 (GQQV…WLAA). Residues 666–783 (PGGSEDARLN…KVPLFGRAAR (118 aa)) form a flexible hinge region. Coiled-coil stretches lie at residues 835–1115 (EAAL…SAKA) and 1206–1266 (DDPV…QAVS). A disordered region spans residues 850–870 (RELNNHESENQQQRQQYEQAK).

It belongs to the SMC family. MukB subfamily. As to quaternary structure, homodimerization via its hinge domain. Binds to DNA via its C-terminal region. Interacts, and probably forms a ternary complex, with MukE and MukF via its C-terminal region. The complex formation is stimulated by calcium or magnesium. Interacts with tubulin-related protein FtsZ.

The protein resides in the cytoplasm. The protein localises to the nucleoid. Plays a central role in chromosome condensation, segregation and cell cycle progression. Functions as a homodimer, which is essential for chromosome partition. Involved in negative DNA supercoiling in vivo, and by this means organize and compact chromosomes. May achieve or facilitate chromosome segregation by condensation DNA from both sides of a centrally located replisome during cell division. The chain is Chromosome partition protein MukB from Erwinia tasmaniensis (strain DSM 17950 / CFBP 7177 / CIP 109463 / NCPPB 4357 / Et1/99).